Reading from the N-terminus, the 259-residue chain is Chloroplastic import inner membrane translocase subunit HP30-2 (259 aa).

The next 4 membrane-spanning stretches (helical) occupy residues 55-75, 108-124, 135-155, and 158-178; these read AVVTAMGGVQGAFIGGLMGTL, NFAAITGVNAGIACVMK, AVVAAFGSGVAYSLVSAGLQG, and MNAITTAAGFAVFQGVFFKLG.

Belongs to the Tim17/Tim22/Tim23 family. In terms of assembly, probable component of a protein-conducting channel made of HP30-1, HP30-2 and HP20 that mediates the import of transit sequence-less proteins into the chloroplastic inner membrane. Interacts with CEQORH.

The protein localises to the mitochondrion membrane. The protein resides in the plastid. It localises to the chloroplast inner membrane. Together with HP30-1 and HP20, triggers the import and insertion of transit sequence-less multi-pass transmembrane proteins (e.g. CEQORH) into the chloroplastic inner membrane. This chain is Chloroplastic import inner membrane translocase subunit HP30-2, found in Arabidopsis thaliana (Mouse-ear cress).